A 350-amino-acid chain; its full sequence is Spermidine/putrescine import ATP-binding protein PotA (350 aa).

Residues 6–236 enclose the ABC transporter domain; that stretch reads LELRNISKQY…PENLWTAQFI (231 aa). 38–45 contributes to the ATP binding site; it reads GPSGCGKT.

The protein belongs to the ABC transporter superfamily. Spermidine/putrescine importer (TC 3.A.1.11.1) family. The complex is composed of two ATP-binding proteins (PotA), two transmembrane proteins (PotB and PotC) and a solute-binding protein (PotD).

The protein localises to the cell membrane. The catalysed reaction is ATP + H2O + polyamine-[polyamine-binding protein]Side 1 = ADP + phosphate + polyamineSide 2 + [polyamine-binding protein]Side 1.. Part of the ABC transporter complex PotABCD involved in spermidine/putrescine import. Responsible for energy coupling to the transport system. This is Spermidine/putrescine import ATP-binding protein PotA from Spiroplasma citri.